Reading from the N-terminus, the 210-residue chain is Thiamine-phosphate synthase 2 (210 aa).

Residues 38 to 42 and aspartate 70 each bind 4-amino-2-methyl-5-(diphosphooxymethyl)pyrimidine; that span reads QLREK. Residues aspartate 71 and glutamate 90 each coordinate Mg(2+). Threonine 109 lines the 4-amino-2-methyl-5-(diphosphooxymethyl)pyrimidine pocket. A 2-[(2R,5Z)-2-carboxy-4-methylthiazol-5(2H)-ylidene]ethyl phosphate-binding site is contributed by 135-137; it reads TTT. Lysine 138 lines the 4-amino-2-methyl-5-(diphosphooxymethyl)pyrimidine pocket. Glycine 165 is a 2-[(2R,5Z)-2-carboxy-4-methylthiazol-5(2H)-ylidene]ethyl phosphate binding site.

Belongs to the thiamine-phosphate synthase family. Mg(2+) serves as cofactor.

The enzyme catalyses 2-[(2R,5Z)-2-carboxy-4-methylthiazol-5(2H)-ylidene]ethyl phosphate + 4-amino-2-methyl-5-(diphosphooxymethyl)pyrimidine + 2 H(+) = thiamine phosphate + CO2 + diphosphate. The catalysed reaction is 2-(2-carboxy-4-methylthiazol-5-yl)ethyl phosphate + 4-amino-2-methyl-5-(diphosphooxymethyl)pyrimidine + 2 H(+) = thiamine phosphate + CO2 + diphosphate. It catalyses the reaction 4-methyl-5-(2-phosphooxyethyl)-thiazole + 4-amino-2-methyl-5-(diphosphooxymethyl)pyrimidine + H(+) = thiamine phosphate + diphosphate. Its pathway is cofactor biosynthesis; thiamine diphosphate biosynthesis; thiamine phosphate from 4-amino-2-methyl-5-diphosphomethylpyrimidine and 4-methyl-5-(2-phosphoethyl)-thiazole: step 1/1. Functionally, condenses 4-methyl-5-(beta-hydroxyethyl)thiazole monophosphate (THZ-P) and 2-methyl-4-amino-5-hydroxymethyl pyrimidine pyrophosphate (HMP-PP) to form thiamine monophosphate (TMP). This chain is Thiamine-phosphate synthase 2, found in Streptococcus pneumoniae serotype 4 (strain ATCC BAA-334 / TIGR4).